We begin with the raw amino-acid sequence, 432 residues long: Maltoporin (432 aa).

Residues M1–A22 form the signal peptide.

Belongs to the porin LamB (TC 1.B.3) family. As to quaternary structure, homotrimer formed of three 18-stranded antiparallel beta-barrels, containing three independent channels.

It is found in the cell outer membrane. It carries out the reaction beta-maltose(in) = beta-maltose(out). In terms of biological role, involved in the transport of maltose and maltodextrins. The chain is Maltoporin from Vibrio parahaemolyticus serotype O3:K6 (strain RIMD 2210633).